The primary structure comprises 130 residues: Large ribosomal subunit protein eL34 (130 aa).

A disordered region spans residues 111-130; that stretch reads KPVSKPPKIQKTAKAASKSK.

Belongs to the eukaryotic ribosomal protein eL34 family.

The polypeptide is Large ribosomal subunit protein eL34 (RpL34) (Aedes albopictus (Asian tiger mosquito)).